The sequence spans 580 residues: Putative adenine deaminase YerA (580 aa).

A Phosphoserine modification is found at Ser399.

The protein belongs to the metallo-dependent hydrolases superfamily. Adenine deaminase family.

It catalyses the reaction adenine + H2O + H(+) = hypoxanthine + NH4(+). The protein is Putative adenine deaminase YerA (yerA) of Bacillus subtilis (strain 168).